We begin with the raw amino-acid sequence, 315 residues long: Homoserine kinase (315 aa).

96 to 106 (PHSRGLGSSAA) serves as a coordination point for ATP.

It belongs to the GHMP kinase family. Homoserine kinase subfamily.

The protein localises to the cytoplasm. The enzyme catalyses L-homoserine + ATP = O-phospho-L-homoserine + ADP + H(+). The protein operates within amino-acid biosynthesis; L-threonine biosynthesis; L-threonine from L-aspartate: step 4/5. Its function is as follows. Catalyzes the ATP-dependent phosphorylation of L-homoserine to L-homoserine phosphate. The chain is Homoserine kinase from Mycobacterium leprae (strain Br4923).